The following is a 312-amino-acid chain: Ribosomal protein L11 methyltransferase (312 aa).

Residues Thr-160, Gly-181, Asp-203, and Asn-246 each coordinate S-adenosyl-L-methionine.

The protein belongs to the methyltransferase superfamily. PrmA family.

The protein localises to the cytoplasm. It catalyses the reaction L-lysyl-[protein] + 3 S-adenosyl-L-methionine = N(6),N(6),N(6)-trimethyl-L-lysyl-[protein] + 3 S-adenosyl-L-homocysteine + 3 H(+). Methylates ribosomal protein L11. This is Ribosomal protein L11 methyltransferase from Staphylococcus saprophyticus subsp. saprophyticus (strain ATCC 15305 / DSM 20229 / NCIMB 8711 / NCTC 7292 / S-41).